Consider the following 141-residue polypeptide: Hemoglobin subunit alpha (141 aa).

A Globin domain is found at Val1 to Arg141. Phosphoserine is present on Ser3. Position 7 is an N6-succinyllysine (Lys7). At Thr8 the chain carries Phosphothreonine. Residue Lys11 is modified to N6-succinyllysine. N6-acetyllysine; alternate is present on Lys16. N6-succinyllysine; alternate is present on Lys16. Ser35 carries the post-translational modification Phosphoserine. Lys40 is subject to N6-succinyllysine. Ser49 is subject to Phosphoserine. His58 provides a ligand contact to O2. Position 87 (His87) interacts with heme b. Position 102 is a phosphoserine (Ser102). At Thr108 the chain carries Phosphothreonine. Ser124 and Ser131 each carry phosphoserine. A phosphothreonine mark is found at Thr134 and Thr137. Position 138 is a phosphoserine (Ser138).

The protein belongs to the globin family. In terms of assembly, heterotetramer of two alpha chains and two beta chains. In terms of tissue distribution, red blood cells.

Its function is as follows. Involved in oxygen transport from the lung to the various peripheral tissues. The sequence is that of Hemoglobin subunit alpha from Sciurus carolinensis (Eastern gray squirrel).